We begin with the raw amino-acid sequence, 186 residues long: MKVIIGLGNIGKEYEKTRHNAGFIAIDLLLEKYKYNSIKEEFNSLVYTSIINNQKVLFVKPLTFMNNSGLTVKQIINFYKIDLNDLIVIHDDKDLNISRIQFKKDGSSAGHNGIKSIINNLNTQDFYRLRIGINKPANQWKIVDWVLSKFSDDELNLLKESFNNKSEFINDFTNNKTFTYLMNKYN.

Y14 is a binding site for tRNA. Residue H19 is the Proton acceptor of the active site. TRNA contacts are provided by F64, N66, and N112.

This sequence belongs to the PTH family. Monomer.

It is found in the cytoplasm. It catalyses the reaction an N-acyl-L-alpha-aminoacyl-tRNA + H2O = an N-acyl-L-amino acid + a tRNA + H(+). In terms of biological role, hydrolyzes ribosome-free peptidyl-tRNAs (with 1 or more amino acids incorporated), which drop off the ribosome during protein synthesis, or as a result of ribosome stalling. Its function is as follows. Catalyzes the release of premature peptidyl moieties from peptidyl-tRNA molecules trapped in stalled 50S ribosomal subunits, and thus maintains levels of free tRNAs and 50S ribosomes. This chain is Peptidyl-tRNA hydrolase, found in Mycoplasma capricolum subsp. capricolum (strain California kid / ATCC 27343 / NCTC 10154).